The chain runs to 606 residues: Polypeptide N-acetylgalactosaminyltransferase 9 (606 aa).

Residues 1 to 6 (MAVARK) lie on the Cytoplasmic side of the membrane. A helical; Signal-anchor for type II membrane protein membrane pass occupies residues 7 to 29 (IRTLLTVNILVFVGIVLFSVYCR). Residues 30–606 (LQGRSQELVR…IRNWIKHARH (577 aa)) lie on the Lumenal side of the membrane. The segment at 43 to 62 (GGCRPRPATPAPGSPLRSGG) is disordered. 2 disulfides stabilise this stretch: Cys-144/Cys-375 and Cys-366/Cys-445. The segment at 153 to 264 (LPQVSVVFIF…TGWAEPALSR (112 aa)) is catalytic subdomain A. Substrate is bound by residues Asp-194 and Arg-225. Mn(2+) contacts are provided by Asp-248, His-250, and His-380. The segment at 321 to 383 (PIRTPAMIGC…PCSRVAHIER (63 aa)) is catalytic subdomain B. Residues Arg-383 and Tyr-388 each contribute to the substrate site. Asn-463 carries an N-linked (GlcNAc...) asparagine glycan. A Ricin B-type lectin domain is found at 467–603 (TYGEVRNSKA…KWMIRNWIKH (137 aa)). Disulfide bonds link Cys-480-Cys-496, Cys-528-Cys-543, and Cys-570-Cys-590.

This sequence belongs to the glycosyltransferase 2 family. GalNAc-T subfamily. Requires Mn(2+) as cofactor.

The protein resides in the golgi apparatus membrane. The enzyme catalyses L-seryl-[protein] + UDP-N-acetyl-alpha-D-galactosamine = a 3-O-[N-acetyl-alpha-D-galactosaminyl]-L-seryl-[protein] + UDP + H(+). It catalyses the reaction L-threonyl-[protein] + UDP-N-acetyl-alpha-D-galactosamine = a 3-O-[N-acetyl-alpha-D-galactosaminyl]-L-threonyl-[protein] + UDP + H(+). The protein operates within protein modification; protein glycosylation. In terms of biological role, catalyzes the initial reaction in O-linked oligosaccharide biosynthesis, the transfer of an N-acetyl-D-galactosamine residue to a serine or threonine residue on the protein receptor. Does not glycosylate apomucin or SDC3. The polypeptide is Polypeptide N-acetylgalactosaminyltransferase 9 (GALNT9) (Macaca fascicularis (Crab-eating macaque)).